The primary structure comprises 314 residues: Porphobilinogen deaminase (314 aa).

Cysteine 242 is subject to S-(dipyrrolylmethanemethyl)cysteine.

This sequence belongs to the HMBS family. As to quaternary structure, monomer. The cofactor is dipyrromethane.

The catalysed reaction is 4 porphobilinogen + H2O = hydroxymethylbilane + 4 NH4(+). Its pathway is porphyrin-containing compound metabolism; protoporphyrin-IX biosynthesis; coproporphyrinogen-III from 5-aminolevulinate: step 2/4. Functionally, tetrapolymerization of the monopyrrole PBG into the hydroxymethylbilane pre-uroporphyrinogen in several discrete steps. The protein is Porphobilinogen deaminase (hemC) of Bacillus subtilis (strain 168).